The sequence spans 1005 residues: PDZ domain-containing protein 7 (1005 aa).

PDZ domains follow at residues 86–168 (SVRV…RMGR) and 210–293 (IVHL…ETGR). Disordered regions lie at residues 353–378 (PEEP…DAGG), 700–859 (VSPS…KTPS), and 949–1005 (VRVP…ARLL). A compositionally biased stretch (basic residues) spans 770–786 (AQSRSRSRSRSRSRSRS). The span at 787–799 (SRGQGKSPGRRSP) shows a compositional bias: low complexity. Residues 989–998 (PEPPTNPQTP) are compositionally biased toward pro residues.

Homodimerizes (via PDZ2 domain). Component of USH2 complex, composed of ADGRV1, PDZD7, USH2A and WHRN. Interacts (via PDZ domains) with WHRN; the interaction is direct. Interacts with USH1G. Interacts with ADGRV1 (via the cytoplasmic region). Interacts with USH2A (via the cytoplasmic region). Interacts with MYO7A (via MyTH4-FERM domains).

The protein resides in the cell projection. Its subcellular location is the cilium. It localises to the nucleus. The protein localises to the stereocilium. In cochlear developing hair cells, essential in organizing the USH2 complex at stereocilia ankle links. Blocks inhibition of adenylate cyclase activity mediated by ADGRV1. In Pongo abelii (Sumatran orangutan), this protein is PDZ domain-containing protein 7 (PDZD7).